The following is a 677-amino-acid chain: Pentatricopeptide repeat-containing protein At5g39350 (677 aa).

16 PPR repeats span residues 48–78 (SGHILSTLSVTYALCGHITYARKLFEEMPQS), 79–113 (SLLSYNIVIRMYVREGLYHDAISVFIRMVSEGVKC), 116–146 (DGYTYPFVAKAAGELKSMKLGLVVHGRILRS), 151–181 (DKYVQNALLAMYMNFGKVEMARDVFDVMKNR), 182–216 (DVISWNTMISGYYRNGYMNDALMMFDWMVNESVDL), 217–251 (DHATIVSMLPVCGHLKDLEMGRNVHKLVEEKRLGD), 252–282 (KIEVKNALVNMYLKCGRMDEARFVFDRMERR), 283–317 (DVITWTCMINGYTEDGDVENALELCRLMQFEGVRP), 318–352 (NAVTIASLVSVCGDALKVNDGKCLHGWAVRQQVYS), 353–383 (DIIIETSLISMYAKCKRVDLCFRVFSGASKY), 384–418 (HTGPWSAIIAGCVQNELVSDALGLFKRMRREDVEP), 419–453 (NIATLNSLLPAYAALADLRQAMNIHCYLTKTGFMS), 454–488 (SLDAATGLVHVYSKCGTLESAHKIFNGIQEKHKSK), 489–523 (DVVLWGALISGYGMHGDGHNALQVFMEMVRSGVTP), 524–554 (NEITFTSALNACSHSGLVEEGLTLFRFMLEH), and 560–590 (RSNHYTCIVDLLGRAGRLDEAYNLITTIPFE). Residues 595-670 (VWGALLAACV…KPGHSTIEIR (76 aa)) form a type E motif region.

It belongs to the PPR family. PCMP-E subfamily.

The chain is Pentatricopeptide repeat-containing protein At5g39350 (PCMP-E16) from Arabidopsis thaliana (Mouse-ear cress).